Reading from the N-terminus, the 207-residue chain is Thiamine-phosphate synthase (207 aa).

Residues 38–42 (QYRNK) and Asn-70 contribute to the 4-amino-2-methyl-5-(diphosphooxymethyl)pyrimidine site. Positions 71 and 90 each coordinate Mg(2+). Ser-109 is a binding site for 4-amino-2-methyl-5-(diphosphooxymethyl)pyrimidine. 136–138 (TAT) contacts 2-[(2R,5Z)-2-carboxy-4-methylthiazol-5(2H)-ylidene]ethyl phosphate. Lys-139 is a binding site for 4-amino-2-methyl-5-(diphosphooxymethyl)pyrimidine. Residues Gly-165 and 185-186 (VS) each bind 2-[(2R,5Z)-2-carboxy-4-methylthiazol-5(2H)-ylidene]ethyl phosphate.

This sequence belongs to the thiamine-phosphate synthase family. It depends on Mg(2+) as a cofactor.

It catalyses the reaction 2-[(2R,5Z)-2-carboxy-4-methylthiazol-5(2H)-ylidene]ethyl phosphate + 4-amino-2-methyl-5-(diphosphooxymethyl)pyrimidine + 2 H(+) = thiamine phosphate + CO2 + diphosphate. The enzyme catalyses 2-(2-carboxy-4-methylthiazol-5-yl)ethyl phosphate + 4-amino-2-methyl-5-(diphosphooxymethyl)pyrimidine + 2 H(+) = thiamine phosphate + CO2 + diphosphate. It carries out the reaction 4-methyl-5-(2-phosphooxyethyl)-thiazole + 4-amino-2-methyl-5-(diphosphooxymethyl)pyrimidine + H(+) = thiamine phosphate + diphosphate. Its pathway is cofactor biosynthesis; thiamine diphosphate biosynthesis; thiamine phosphate from 4-amino-2-methyl-5-diphosphomethylpyrimidine and 4-methyl-5-(2-phosphoethyl)-thiazole: step 1/1. Condenses 4-methyl-5-(beta-hydroxyethyl)thiazole monophosphate (THZ-P) and 2-methyl-4-amino-5-hydroxymethyl pyrimidine pyrophosphate (HMP-PP) to form thiamine monophosphate (TMP). The polypeptide is Thiamine-phosphate synthase (Xanthomonas campestris pv. campestris (strain 8004)).